A 260-amino-acid chain; its full sequence is Snake venom serine protease Dav-X (260 aa).

The first 18 residues, 1–18 (MVLIRVLANLLILQLSYA), serve as a signal peptide directing secretion. Residues 19–24 (QKSSEL) constitute a propeptide that is removed on maturation. In terms of domain architecture, Peptidase S1 spans 25 to 251 (VIGGVECDIN…YTDWIQNIIA (227 aa)). 6 disulfide bridges follow: cysteine 31–cysteine 165, cysteine 52–cysteine 68, cysteine 102–cysteine 258, cysteine 144–cysteine 212, cysteine 176–cysteine 191, and cysteine 202–cysteine 227. Histidine 67 functions as the Charge relay system in the catalytic mechanism. The N-linked (GlcNAc...) asparagine glycan is linked to asparagine 81. The active-site Charge relay system is the aspartate 112. N-linked (GlcNAc...) asparagine glycosylation is found at asparagine 124 and asparagine 172. Serine 206 acts as the Charge relay system in catalysis. The N-linked (GlcNAc...) asparagine glycan is linked to asparagine 241.

It belongs to the peptidase S1 family. Snake venom subfamily. As to quaternary structure, monomer. As to expression, expressed by the venom gland.

The protein localises to the secreted. Snake venom serine protease that may act in the hemostasis system of the prey. In Deinagkistrodon acutus (Hundred-pace snake), this protein is Snake venom serine protease Dav-X.